The following is a 697-amino-acid chain: Polyribonucleotide nucleotidyltransferase (697 aa).

Mg(2+) contacts are provided by Asp489 and Asp495. The region spanning 556 to 615 (PRIETIKIKPDKIREVIGSGGKVIRGITEATGVKIEIQDDGTINIASADPEATKKAIAMI) is the KH domain. Positions 625–693 (GKTYKGRIVK…RSGRVKLSRK (69 aa)) constitute an S1 motif domain.

This sequence belongs to the polyribonucleotide nucleotidyltransferase family. Requires Mg(2+) as cofactor.

The protein localises to the cytoplasm. It catalyses the reaction RNA(n+1) + phosphate = RNA(n) + a ribonucleoside 5'-diphosphate. In terms of biological role, involved in mRNA degradation. Catalyzes the phosphorolysis of single-stranded polyribonucleotides processively in the 3'- to 5'-direction. The chain is Polyribonucleotide nucleotidyltransferase from Bdellovibrio bacteriovorus (strain ATCC 15356 / DSM 50701 / NCIMB 9529 / HD100).